The chain runs to 282 residues: Putative hydrolase BamMC406_5393 (282 aa).

E124, E126, and D155 together coordinate Mg(2+).

This sequence belongs to the FAH family. Mg(2+) is required as a cofactor.

This chain is Putative hydrolase BamMC406_5393, found in Burkholderia ambifaria (strain MC40-6).